We begin with the raw amino-acid sequence, 356 residues long: Mannonate dehydratase 2 (356 aa).

The protein belongs to the mannonate dehydratase family. Fe(2+) serves as cofactor. Mn(2+) is required as a cofactor.

It catalyses the reaction D-mannonate = 2-dehydro-3-deoxy-D-gluconate + H2O. Its pathway is carbohydrate metabolism; pentose and glucuronate interconversion. Functionally, catalyzes the dehydration of D-mannonate. The sequence is that of Mannonate dehydratase 2 from Bacillus licheniformis (strain ATCC 14580 / DSM 13 / JCM 2505 / CCUG 7422 / NBRC 12200 / NCIMB 9375 / NCTC 10341 / NRRL NRS-1264 / Gibson 46).